The primary structure comprises 459 residues: tRNA modification GTPase MnmE (459 aa).

Residues Arg20, Glu85, and Arg124 each coordinate (6S)-5-formyl-5,6,7,8-tetrahydrofolate. A TrmE-type G domain is found at 221-380 (GLSTVIIGRP…LEEAIQSLFY (160 aa)). Asn231 serves as a coordination point for K(+). GTP contacts are provided by residues 231-236 (NVGKSS), 250-256 (TDIPGTT), and 275-278 (DTAG). Ser235 lines the Mg(2+) pocket. Thr250, Ile252, and Thr255 together coordinate K(+). Thr256 contacts Mg(2+). Lys459 contributes to the (6S)-5-formyl-5,6,7,8-tetrahydrofolate binding site.

The protein belongs to the TRAFAC class TrmE-Era-EngA-EngB-Septin-like GTPase superfamily. TrmE GTPase family. As to quaternary structure, homodimer. Heterotetramer of two MnmE and two MnmG subunits. K(+) serves as cofactor.

Its subcellular location is the cytoplasm. Functionally, exhibits a very high intrinsic GTPase hydrolysis rate. Involved in the addition of a carboxymethylaminomethyl (cmnm) group at the wobble position (U34) of certain tRNAs, forming tRNA-cmnm(5)s(2)U34. This is tRNA modification GTPase MnmE from Bacillus subtilis (strain 168).